A 205-amino-acid polypeptide reads, in one-letter code: Probable inactive peroxygenase-like protein (205 aa).

The Proline-knot motif lies at 79–88 (PVQLFGYILP). Ser-183 is subject to Phosphoserine.

The protein belongs to the caleosin family.

The protein localises to the lipid droplet. The chain is Probable inactive peroxygenase-like protein from Arabidopsis thaliana (Mouse-ear cress).